The primary structure comprises 275 residues: 2,3,4,5-tetrahydropyridine-2,6-dicarboxylate N-succinyltransferase (275 aa).

It belongs to the transferase hexapeptide repeat family.

The protein localises to the cytoplasm. The enzyme catalyses (S)-2,3,4,5-tetrahydrodipicolinate + succinyl-CoA + H2O = (S)-2-succinylamino-6-oxoheptanedioate + CoA. Its pathway is amino-acid biosynthesis; L-lysine biosynthesis via DAP pathway; LL-2,6-diaminopimelate from (S)-tetrahydrodipicolinate (succinylase route): step 1/3. This chain is 2,3,4,5-tetrahydropyridine-2,6-dicarboxylate N-succinyltransferase, found in Burkholderia multivorans (strain ATCC 17616 / 249).